We begin with the raw amino-acid sequence, 152 residues long: Large ribosomal subunit protein bL9 (152 aa).

The protein belongs to the bacterial ribosomal protein bL9 family.

Its function is as follows. Binds to the 23S rRNA. This is Large ribosomal subunit protein bL9 from Trichormus variabilis (strain ATCC 29413 / PCC 7937) (Anabaena variabilis).